The chain runs to 1177 residues: DNA-directed RNA polymerase subunit beta (1177 aa).

Residues 1 to 36 are disordered; sequence MEGCILADSRQSKTAASPSPSRPQSSSNNSVPGAPN. A compositionally biased stretch (low complexity) spans 17-32; that stretch reads SPSPSRPQSSSNNSVP.

This sequence belongs to the RNA polymerase beta chain family. The RNAP catalytic core consists of 2 alpha, 1 beta, 1 beta' and 1 omega subunit. When a sigma factor is associated with the core the holoenzyme is formed, which can initiate transcription.

It carries out the reaction RNA(n) + a ribonucleoside 5'-triphosphate = RNA(n+1) + diphosphate. In terms of biological role, DNA-dependent RNA polymerase catalyzes the transcription of DNA into RNA using the four ribonucleoside triphosphates as substrates. In Mycobacterium tuberculosis (strain ATCC 25177 / H37Ra), this protein is DNA-directed RNA polymerase subunit beta.